A 414-amino-acid polypeptide reads, in one-letter code: Probable protein phosphatase 2C 9 (414 aa).

Residues 15–37 form a helical membrane-spanning segment; the sequence is TATAAVAAAVSASAAAAVSSAID. The segment at 56–95 is disordered; the sequence is LQAGEDGRPGKRQRLARTASGAPRPDEDSASERPSCGRTE. A PPM-type phosphatase domain is found at 99–410; sequence RYGVTAVCGR…DNVSVVVVDL (312 aa). Positions 136 and 137 each coordinate Mn(2+). Residues 186–195 are compositionally biased toward basic and acidic residues; that stretch reads GNRASTRSDD. Positions 186–212 are disordered; sequence GNRASTRSDDEPACPCEQQTPSRRDHA. Asp-319 lines the Mn(2+) pocket. The disordered stretch occupies residues 345–372; that stretch reads APAARPSGVPSSAEAAETENGGAASVKG. Over residues 355 to 369 the composition is skewed to low complexity; the sequence is SSAEAAETENGGAAS. Asp-401 lines the Mn(2+) pocket.

The protein belongs to the PP2C family. Mg(2+) serves as cofactor. It depends on Mn(2+) as a cofactor.

It is found in the membrane. The enzyme catalyses O-phospho-L-seryl-[protein] + H2O = L-seryl-[protein] + phosphate. The catalysed reaction is O-phospho-L-threonyl-[protein] + H2O = L-threonyl-[protein] + phosphate. The protein is Probable protein phosphatase 2C 9 of Oryza sativa subsp. japonica (Rice).